The following is a 542-amino-acid chain: MARYVFITGGVVSSLGKGIAAAALAALLQARGYRVRIRKLDPYLNVDPGTMSPYQHGEVFVTDDGAETDLDLGHYERFTGRPANQQDNITTGRIYRNIIEKERRGDYLGATVQVIPHVTDEIKNFVLEGNEDYDFVLCEIGGTVGDIEAMPFLEAIRQLGNELPRGTAVYIHLTLMPYIPAAGELKTKPTQHSVKELRSIGIAPDILLVRADREIPESERRKLSLFCNVRESAVIQALDVATIYDVPIAYHKEGLDSEVLSAFGIDPAPKPRMDRWEEVSHRLHNPEGEVTIAVVGKYTGLKDAYKSLIEALHHGGLANKVKVNLDWIEAEVFESEDPAPYLEKVHGILVPGGFGERGAEGKILAAKFARERKVPYFGICFGMQMACIEAARNLVGIEDASSSEFGPTREPVVGLMTEWLKGNMLEKRAAAGDLGGTMRLGAYEAVLKPDSKIAQIYGSTDIHERHRHRYEVNIDYKDRLEAAGLNFAGMSPDGVLPETVEYADHPWFIGVQYHPELKSRPFEPHPLFASFIEAAIEQSRLV.

Residues 1-265 form an amidoligase domain region; it reads MARYVFITGG…DSEVLSAFGI (265 aa). Ser-13 provides a ligand contact to CTP. Ser-13 is a UTP binding site. 14-19 serves as a coordination point for ATP; sequence SLGKGI. Tyr-54 contributes to the L-glutamine binding site. ATP is bound at residue Asp-71. Positions 71 and 139 each coordinate Mg(2+). CTP-binding positions include 146 to 148, 186 to 191, and Lys-222; these read DIE and KTKPTQ. UTP contacts are provided by residues 186–191 and Lys-222; that span reads KTKPTQ. The Glutamine amidotransferase type-1 domain maps to 291–541; that stretch reads TIAVVGKYTG…IEAAIEQSRL (251 aa). Gly-353 provides a ligand contact to L-glutamine. Cys-380 acts as the Nucleophile; for glutamine hydrolysis in catalysis. L-glutamine contacts are provided by residues 381-384, Glu-404, and Arg-469; that span reads FGMQ. Residues His-514 and Glu-516 contribute to the active site.

The protein belongs to the CTP synthase family. As to quaternary structure, homotetramer.

The enzyme catalyses UTP + L-glutamine + ATP + H2O = CTP + L-glutamate + ADP + phosphate + 2 H(+). It catalyses the reaction L-glutamine + H2O = L-glutamate + NH4(+). The catalysed reaction is UTP + NH4(+) + ATP = CTP + ADP + phosphate + 2 H(+). It functions in the pathway pyrimidine metabolism; CTP biosynthesis via de novo pathway; CTP from UDP: step 2/2. With respect to regulation, allosterically activated by GTP, when glutamine is the substrate; GTP has no effect on the reaction when ammonia is the substrate. The allosteric effector GTP functions by stabilizing the protein conformation that binds the tetrahedral intermediate(s) formed during glutamine hydrolysis. Inhibited by the product CTP, via allosteric rather than competitive inhibition. Functionally, catalyzes the ATP-dependent amination of UTP to CTP with either L-glutamine or ammonia as the source of nitrogen. Regulates intracellular CTP levels through interactions with the four ribonucleotide triphosphates. This is CTP synthase from Brucella melitensis biotype 2 (strain ATCC 23457).